A 692-amino-acid chain; its full sequence is Threonine--tRNA ligase (692 aa).

A disordered region spans residues 1–20; it reads MSAPAQPAPGVDGGDPSQAR. The 74-residue stretch at 1 to 74 folds into the TGS domain; sequence MSAPAQPAPG…DVDTDITPVA (74 aa). Residues 269–575 form a catalytic region; sequence DHRKLGVELD…LTEHYAGAFP (307 aa). Zn(2+) is bound by residues Cys-374, His-425, and His-552.

It belongs to the class-II aminoacyl-tRNA synthetase family. Homodimer. It depends on Zn(2+) as a cofactor.

The protein localises to the cytoplasm. It catalyses the reaction tRNA(Thr) + L-threonine + ATP = L-threonyl-tRNA(Thr) + AMP + diphosphate + H(+). In terms of biological role, catalyzes the attachment of threonine to tRNA(Thr) in a two-step reaction: L-threonine is first activated by ATP to form Thr-AMP and then transferred to the acceptor end of tRNA(Thr). Also edits incorrectly charged L-seryl-tRNA(Thr). The polypeptide is Threonine--tRNA ligase (Mycobacterium tuberculosis (strain CDC 1551 / Oshkosh)).